A 563-amino-acid polypeptide reads, in one-letter code: Pyruvate decarboxylase isozyme 1 (563 aa).

The residue at position 2 (Ser-2) is an N-acetylserine. Asp-28, His-115, and Tyr-157 together coordinate pyruvate. The residue at position 161 (Arg-161) is an Omega-N-methylarginine. A Glycyl lysine isopeptide (Lys-Gly) (interchain with G-Cter in ubiquitin) cross-link involves residue Lys-212. At Ser-223 the chain carries Phosphoserine. Arg-224 contacts pyruvate. Lys-233 participates in a covalent cross-link: Glycyl lysine isopeptide (Lys-Gly) (interchain with G-Cter in ubiquitin). Residue Thr-266 is modified to Phosphothreonine. Residues Lys-269 and Lys-332 each participate in a glycyl lysine isopeptide (Lys-Gly) (interchain with G-Cter in ubiquitin) cross-link. 2 positions are modified to phosphothreonine: Thr-336 and Thr-353. Thiamine diphosphate-binding positions include Thr-390 and 413–415; that span reads GSI. Asp-444 is a binding site for Mg(2+). Residues 445–446 and 471–476 contribute to the thiamine diphosphate site; these read GS and NDGYTI. Positions 471 and 473 each coordinate Mg(2+). A pyruvate-binding site is contributed by Glu-477. Glycyl lysine isopeptide (Lys-Gly) (interchain with G-Cter in ubiquitin) cross-links involve residues Lys-484, Lys-505, and Lys-520. Thr-522 is modified (phosphothreonine). At Ser-526 the chain carries Phosphoserine.

The protein belongs to the TPP enzyme family. In terms of assembly, homotetramer. It depends on Mg(2+) as a cofactor. Thiamine diphosphate serves as cofactor. Cleavage of N-terminal methionine and N-terminal acetylation by NAT1/ARD1.

Its subcellular location is the cytoplasm. It localises to the nucleus. The enzyme catalyses pyruvate + H(+) = acetaldehyde + CO2. The catalysed reaction is 3-methyl-2-oxobutanoate + H(+) = 2-methylpropanal + CO2. It carries out the reaction (S)-3-methyl-2-oxopentanoate + H(+) = 2-methylbutanal + CO2. It catalyses the reaction indole-3-pyruvate + H(+) = indole-3-acetaldehyde + CO2. The enzyme catalyses 3-phenylpyruvate + H(+) = 2-phenylacetaldehyde + CO2. The catalysed reaction is 2-oxobutanoate + H(+) = propanal + CO2. It carries out the reaction 2-oxopentanoate + H(+) = butanal + CO2. It catalyses the reaction 2 acetaldehyde = acetoin. The enzyme catalyses acetaldehyde + pyruvate + H(+) = acetoin + CO2. It participates in fermentation; ethanol fermentation. Its pathway is amino-acid degradation; Ehrlich pathway. Its activity is regulated as follows. Allosterically activated by its substrate, pyruvate. Its function is as follows. Major of three pyruvate decarboxylases (PDC1, PDC5, PDC6) implicated in the nonoxidative conversion of pyruvate to acetaldehyde and carbon dioxide during alcoholic fermentation. Most of the produced acetaldehyde is subsequently reduced to ethanol, but some is required for cytosolic acetyl-CoA production for biosynthetic pathways. The enzyme is also one of five 2-oxo acid decarboxylases (PDC1, PDC5, PDC6, ARO10, and THI3) able to decarboxylate more complex 2-oxo acids (alpha-ketoacids) than pyruvate, which seem mainly involved in amino acid catabolism. Here the enzyme catalyzes the decarboxylation of amino acids, which, in a first step, have been transaminated to the corresponding 2-oxo acids. In a third step, the resulting aldehydes are reduced to alcohols, collectively referred to as fusel oils or alcohols. Its preferred substrates are the transaminated amino acids derived from threonine (2-oxobutanoate), norvaline (2-oxopentanoate), valine (3-methyl-2-oxobutanoate, also alpha-keto-isovalerate), isoleucine ((3S)-3-methyl-2-oxopentanoate, also alpha-keto-beta-methylvalerate), phenylalanine (phenylpyruvate), and tryptophan (3-(indol-3-yl)pyruvate), whereas transaminated leucine is no substrate. In a side-reaction the carbanionic intermediate (or active aldehyde) generated by decarboxylation or by activation of an aldehyde can react with an aldehyde via condensation (or carboligation) yielding a 2-hydroxy ketone, collectively called acyloins. The chain is Pyruvate decarboxylase isozyme 1 from Saccharomyces cerevisiae (strain ATCC 204508 / S288c) (Baker's yeast).